Reading from the N-terminus, the 235-residue chain is Ornithine decarboxylase antizyme 3 (235 aa).

Phosphoserine is present on residues Ser-9 and Ser-12.

It belongs to the ODC antizyme family. In terms of assembly, interacts with ODC1 and thereby sterically blocks ODC homodimerization. Interacts with AZIN2; this interaction disrupts the interaction between the antizyme and ODC1. Interacts with GGN. In terms of tissue distribution, testis specific.

The protein localises to the nucleus. Its subcellular location is the cytoplasm. In terms of biological role, ornithine decarboxylase (ODC) antizyme protein that negatively regulates ODC activity and intracellular polyamine biosynthesis and uptake in response to increased intracellular polyamine levels. Binds to ODC monomers, inhibiting the assembly of the functional ODC homodimers. Does not target the ODC monomers for degradation, which allows a protein synthesis-independent restoration of ODC activity. Stabilizes AZIN2 by interfering with its ubiquitination. Involved in the translocation of AZNI2 from ER-Golgi intermediate compartment (ERGIC) to the cytosol. Probably plays a key role in spermatogenesis by regulating the intracellular concentration of polyamines in haploid germ cells. In Homo sapiens (Human), this protein is Ornithine decarboxylase antizyme 3 (OAZ3).